The primary structure comprises 486 residues: Betaine aldehyde dehydrogenase (486 aa).

Residues Thr23 and Asp90 each coordinate K(+). 147–149 (GAW) contacts NAD(+). The active-site Charge relay system is Lys159. Residues 173-176 (KPSE) and 226-229 (ESGT) contribute to the NAD(+) site. Leu241 lines the K(+) pocket. Glu247 acts as the Proton acceptor in catalysis. NAD(+) is bound by residues Gly249, Cys281, and Glu382. The active-site Nucleophile is Cys281. A Cysteine sulfenic acid (-SOH) modification is found at Cys281. Lys452 and Gly455 together coordinate K(+). The active-site Charge relay system is the Glu459.

The protein belongs to the aldehyde dehydrogenase family. Dimer of dimers. Requires K(+) as cofactor.

The catalysed reaction is betaine aldehyde + NAD(+) + H2O = glycine betaine + NADH + 2 H(+). It functions in the pathway amine and polyamine biosynthesis; betaine biosynthesis via choline pathway; betaine from betaine aldehyde: step 1/1. In terms of biological role, involved in the biosynthesis of the osmoprotectant glycine betaine. Catalyzes the irreversible oxidation of betaine aldehyde to the corresponding acid. The polypeptide is Betaine aldehyde dehydrogenase (Vibrio vulnificus (strain CMCP6)).